Reading from the N-terminus, the 939-residue chain is Isoleucine--tRNA ligase (939 aa).

The 'HIGH' region signature appears at 57 to 67 (PYANGHIHLGH). Glu-561 contacts L-isoleucyl-5'-AMP. The 'KMSKS' region motif lies at 602–606 (KMSKS). An ATP-binding site is contributed by Lys-605. Residues Cys-903, Cys-906, Cys-923, and Cys-926 each contribute to the Zn(2+) site.

It belongs to the class-I aminoacyl-tRNA synthetase family. IleS type 1 subfamily. In terms of assembly, monomer. The cofactor is Zn(2+).

The protein resides in the cytoplasm. The enzyme catalyses tRNA(Ile) + L-isoleucine + ATP = L-isoleucyl-tRNA(Ile) + AMP + diphosphate. Catalyzes the attachment of isoleucine to tRNA(Ile). As IleRS can inadvertently accommodate and process structurally similar amino acids such as valine, to avoid such errors it has two additional distinct tRNA(Ile)-dependent editing activities. One activity is designated as 'pretransfer' editing and involves the hydrolysis of activated Val-AMP. The other activity is designated 'posttransfer' editing and involves deacylation of mischarged Val-tRNA(Ile). This is Isoleucine--tRNA ligase from Desulfotalea psychrophila (strain LSv54 / DSM 12343).